The sequence spans 327 residues: Spermidine/putrescine import ATP-binding protein PotA (327 aa).

In terms of domain architecture, ABC transporter spans 5–235 (IKVEAVEKHF…PKTLFVATFI (231 aa)). 37–44 (GPSGCGKT) contacts ATP.

Belongs to the ABC transporter superfamily. Spermidine/putrescine importer (TC 3.A.1.11.1) family. In terms of assembly, the complex is composed of two ATP-binding proteins (PotA), two transmembrane proteins (PotB and PotC) and a solute-binding protein (PotD).

The protein resides in the cell membrane. The enzyme catalyses ATP + H2O + polyamine-[polyamine-binding protein]Side 1 = ADP + phosphate + polyamineSide 2 + [polyamine-binding protein]Side 1.. Functionally, part of the ABC transporter complex PotABCD involved in spermidine/putrescine import. Responsible for energy coupling to the transport system. The protein is Spermidine/putrescine import ATP-binding protein PotA of Bacillus thuringiensis (strain Al Hakam).